We begin with the raw amino-acid sequence, 207 residues long: Uracil phosphoribosyltransferase (207 aa).

5-phospho-alpha-D-ribose 1-diphosphate is bound by residues Arg-77, Arg-102, and 129 to 137 (DPMLATGGS). Uracil-binding positions include Ile-192 and 197 to 199 (GDA). Asp-198 serves as a coordination point for 5-phospho-alpha-D-ribose 1-diphosphate.

It belongs to the UPRTase family. It depends on Mg(2+) as a cofactor.

It carries out the reaction UMP + diphosphate = 5-phospho-alpha-D-ribose 1-diphosphate + uracil. Its pathway is pyrimidine metabolism; UMP biosynthesis via salvage pathway; UMP from uracil: step 1/1. With respect to regulation, allosterically activated by GTP. Catalyzes the conversion of uracil and 5-phospho-alpha-D-ribose 1-diphosphate (PRPP) to UMP and diphosphate. In Mesoplasma florum (strain ATCC 33453 / NBRC 100688 / NCTC 11704 / L1) (Acholeplasma florum), this protein is Uracil phosphoribosyltransferase.